We begin with the raw amino-acid sequence, 655 residues long: Threonine--tRNA ligase (655 aa).

The TGS domain maps to 1 to 66 (MIDLVFPDGS…TGERKFEILT (66 aa)). Residues 248-540 (DHRKLGKTMD…LLENFAGALP (293 aa)) are catalytic. Zn(2+) is bound by residues Cys-340, His-391, and His-517.

The protein belongs to the class-II aminoacyl-tRNA synthetase family. As to quaternary structure, homodimer. Zn(2+) is required as a cofactor.

The protein localises to the cytoplasm. It carries out the reaction tRNA(Thr) + L-threonine + ATP = L-threonyl-tRNA(Thr) + AMP + diphosphate + H(+). Catalyzes the attachment of threonine to tRNA(Thr) in a two-step reaction: L-threonine is first activated by ATP to form Thr-AMP and then transferred to the acceptor end of tRNA(Thr). Also edits incorrectly charged L-seryl-tRNA(Thr). This Caulobacter vibrioides (strain ATCC 19089 / CIP 103742 / CB 15) (Caulobacter crescentus) protein is Threonine--tRNA ligase.